The sequence spans 290 residues: Cilia- and flagella-associated protein 298 (290 aa).

The protein belongs to the CFAP298 family. In terms of assembly, interacts with ZMYND10.

The protein resides in the cytoplasm. It is found in the cytoskeleton. Its subcellular location is the cilium basal body. Plays a role in motile cilium function, possibly by acting on outer dynein arm assembly. Seems to be important for initiation rather than maintenance of cilium motility. Required for correct positioning of cilia at the apical cell surface, suggesting an additional role in the planar cell polarity (PCP) pathway. May suppress canonical Wnt signaling activity. In Mus musculus (Mouse), this protein is Cilia- and flagella-associated protein 298.